A 179-amino-acid polypeptide reads, in one-letter code: Ribosome maturation factor RimM (179 aa).

Positions 98-170 constitute a PRC barrel domain; the sequence is PDEFWDRRLR…RIVVSGIPGL (73 aa).

It belongs to the RimM family. Binds ribosomal protein uS19.

It is found in the cytoplasm. Functionally, an accessory protein needed during the final step in the assembly of 30S ribosomal subunit, possibly for assembly of the head region. Essential for efficient processing of 16S rRNA. May be needed both before and after RbfA during the maturation of 16S rRNA. It has affinity for free ribosomal 30S subunits but not for 70S ribosomes. The polypeptide is Ribosome maturation factor RimM (Cutibacterium acnes (strain DSM 16379 / KPA171202) (Propionibacterium acnes)).